A 537-amino-acid polypeptide reads, in one-letter code: Protein disulfide isomerase-like 1-5 (537 aa).

The signal sequence occupies residues 1 to 29 (MSLIPKPISKVSTFTFILLILLSFTIIIA). One can recognise a Thioredoxin 1 domain in the interval 58–184 (LQEDRPEQQS…IVIWVQKKTG (127 aa)). The Nucleophile role is filled by Cys-106. Asn-160, Asn-364, and Asn-416 each carry an N-linked (GlcNAc...) asparagine glycan. In terms of domain architecture, Thioredoxin 2 spans 380-526 (LLESDPSPNS…IAVFINEELL (147 aa)). Catalysis depends on nucleophile residues Cys-447 and Cys-450. An intrachain disulfide couples Cys-447 to Cys-450. A glycan (N-linked (GlcNAc...) asparagine) is linked at Asn-530. The short motif at 534–537 (KDEL) is the Prevents secretion from ER element.

The protein belongs to the protein disulfide isomerase family. Widely expressed.

Its subcellular location is the endoplasmic reticulum lumen. It carries out the reaction Catalyzes the rearrangement of -S-S- bonds in proteins.. Functionally, acts as a protein-folding catalyst that interacts with nascent polypeptides to catalyze the formation, isomerization, and reduction or oxidation of disulfide bonds. The polypeptide is Protein disulfide isomerase-like 1-5 (PDIL1-5) (Arabidopsis thaliana (Mouse-ear cress)).